The chain runs to 518 residues: MTAYKPYRHQLRRSLFASTIFPVFLVIIIGLVSFYAIYIWIEHRTIHQHVDESQSSLHHTEKQIQTFITQHNNSFQELDLTNHHDVTATKRELLKLIHQQPATLYYELSGPNQFITNNYEHLNTKNMYLFSTHQLKFKNSTYMLKIYMANTPRLSEIKKDNRQFALIVDQYDNILYANDDRFTIGEKYRPQQFGFMNESVKLNHADHRLIIYKDIHENIEDGITLLIVMAVVLVLLVIFGFISADNMAKRQTKDIETIIQKIYYAKNRHLGTYTPLKNNSELEEINNYIYDLFESNEQLIHSIEHTERRLRDIQLKEIERQFQPHFLFNTMQTIQYLITLSPKLAQTVVQQLSQMLRYSLRTNSHTVELNEELNYIEQYVAIQNIRFDDMIKLHIESSEEARHQTIGKMMLQPLIENAIKHGRDTESLDITIRLTLARQNLHVLVCDNGIGMSSSRLQYVRQSLNNDVFDTKHLGLNHLHNKAMIQYGSHARLHIFSKRNQGTLICYKIPLSRGNVDV.

A run of 2 helical transmembrane segments spans residues 20–40 (IFPV…IYIW) and 222–242 (GITL…FGFI). Residues 297–513 (EQLIHSIEHT…LICYKIPLSR (217 aa)) form the Histidine kinase domain. Histidine 325 bears the Phosphohistidine; by autocatalysis mark.

Post-translationally, autophosphorylated.

Its subcellular location is the cell membrane. It carries out the reaction ATP + protein L-histidine = ADP + protein N-phospho-L-histidine.. Its function is as follows. Member of the two-component regulatory system HptS/HptR that regulates genes involved in hexose phosphate transport system in response to changes in extracellular phosphate sources. May act as a sensor protein kinase which is autophosphorylated at a histidine residue and transfers its phosphate group to the conserved aspartic acid residue in the regulatory domain of HptS. In turn, HptS antagonizes CcpA-dependent transcription of a subset of CcpA-regulated genes involved in antibiotic susceptibility. The sequence is that of Sensor protein kinase HptS (hptS) from Staphylococcus aureus (strain USA300).